Consider the following 954-residue polypeptide: Chromosomal passenger complex protein BIR1 (954 aa).

BIR repeat units follow at residues 20 to 117 (RLRT…LLIY) and 153 to 241 (RKFT…YFFQ). Residues cysteine 208, cysteine 211, histidine 228, and cysteine 237 each coordinate Zn(2+). The tract at residues 375 to 419 (NVQLTQSSSPIKKKRKFKRISPRKIFDEEDSEHSLNNNSANGDNK) is disordered. Positions 385–396 (IKKKRKFKRISP) are enriched in basic residues. Serine 477, serine 508, and serine 552 each carry phosphoserine. Disordered stretches follow at residues 541-645 (DIDR…SGKV) and 661-685 (FSASDFSPSSQSEQSSKSSSVISTP). The span at 556–583 (PKTHELIRDNSEKREAQNGEFRHQKDST) shows a compositional bias: basic and acidic residues. Serine 587 carries the post-translational modification Phosphoserine. The span at 593-604 (SNKSGDNSSNIT) shows a compositional bias: polar residues. Phosphoserine occurs at positions 751 and 765. Residues 798-839 (LVSGTSSYPRNSRLEEQRKETSTSLADNSKKGSSFNEGNNEK) form a disordered region. The segment covering 809–818 (SRLEEQRKET) has biased composition (basic and acidic residues). Polar residues predominate over residues 819–835 (STSLADNSKKGSSFNEG).

In terms of assembly, component of the CPC complex at least composed of IPL1, BIR1 and SLI15. Interacts with CBF2/NDC10. Interacts with CBF3D/SKP1.

Its function is as follows. Component of the chromosomal passenger complex (CPC), a complex that acts as a key regulator of chromosome segregation and cytokinesis. In Saccharomyces cerevisiae (strain ATCC 204508 / S288c) (Baker's yeast), this protein is Chromosomal passenger complex protein BIR1 (BIR1).